Consider the following 467-residue polypeptide: Neutral protease 2 homolog NFIA_031120 (467 aa).

Residues 1-19 form the signal peptide; sequence MKITALASAILAVVHGALA. Residues 20-172 constitute a propeptide that is removed on maturation; that stretch reads LPARAPALDI…PASIKPLDRR (153 aa). Disulfide bonds link Cys-179–Cys-251 and Cys-258–Cys-276. Zn(2+) is bound at residue His-300. The active site involves Glu-301. Residues His-304 and Asp-315 each contribute to the Zn(2+) site. Positions 359–451 are enriched in polar residues; sequence WDGNSQPGQT…TMWDGSSEPG (93 aa). The segment at 359–467 is disordered; the sequence is WDGNSQPGQT…HTTWGNFYQA (109 aa).

The protein belongs to the peptidase M35 family. It depends on Zn(2+) as a cofactor.

It is found in the secreted. It catalyses the reaction Preferential cleavage of bonds with hydrophobic residues in P1'. Also 3-Asn-|-Gln-4 and 8-Gly-|-Ser-9 bonds in insulin B chain.. Functionally, secreted metalloproteinase that allows assimilation of proteinaceous substrates. Shows high activities on basic nuclear substrates such as histone and protamine. This chain is Neutral protease 2 homolog NFIA_031120, found in Neosartorya fischeri (strain ATCC 1020 / DSM 3700 / CBS 544.65 / FGSC A1164 / JCM 1740 / NRRL 181 / WB 181) (Aspergillus fischerianus).